The sequence spans 122 residues: Large ribosomal subunit protein uL18 (122 aa).

It belongs to the universal ribosomal protein uL18 family. Part of the 50S ribosomal subunit; part of the 5S rRNA/L5/L18/L25 subcomplex. Contacts the 5S and 23S rRNAs.

In terms of biological role, this is one of the proteins that bind and probably mediate the attachment of the 5S RNA into the large ribosomal subunit, where it forms part of the central protuberance. In Mycobacterium ulcerans (strain Agy99), this protein is Large ribosomal subunit protein uL18.